Here is a 186-residue protein sequence, read N- to C-terminus: ATP-dependent protease subunit HslV (186 aa).

Residue T14 is part of the active site. Na(+) is bound by residues A168, C171, and T174.

It belongs to the peptidase T1B family. HslV subfamily. As to quaternary structure, a double ring-shaped homohexamer of HslV is capped on each side by a ring-shaped HslU homohexamer. The assembly of the HslU/HslV complex is dependent on binding of ATP.

The protein localises to the cytoplasm. It catalyses the reaction ATP-dependent cleavage of peptide bonds with broad specificity.. With respect to regulation, allosterically activated by HslU binding. Functionally, protease subunit of a proteasome-like degradation complex believed to be a general protein degrading machinery. This chain is ATP-dependent protease subunit HslV, found in Bradyrhizobium diazoefficiens (strain JCM 10833 / BCRC 13528 / IAM 13628 / NBRC 14792 / USDA 110).